The sequence spans 64 residues: uncharacterized protein (64 aa).

The tract at residues 35–64 (TIRKPPIEHAAGPLGSTSRAGHRSYGGVAS) is disordered.

This is an uncharacterized protein from Mycobacterium tuberculosis (strain ATCC 25618 / H37Rv).